We begin with the raw amino-acid sequence, 210 residues long: N-(5'-phosphoribosyl)anthranilate isomerase (210 aa).

Belongs to the TrpF family.

It carries out the reaction N-(5-phospho-beta-D-ribosyl)anthranilate = 1-(2-carboxyphenylamino)-1-deoxy-D-ribulose 5-phosphate. Its pathway is amino-acid biosynthesis; L-tryptophan biosynthesis; L-tryptophan from chorismate: step 3/5. In Eremothecium gossypii (strain ATCC 10895 / CBS 109.51 / FGSC 9923 / NRRL Y-1056) (Yeast), this protein is N-(5'-phosphoribosyl)anthranilate isomerase (TRP1).